The chain runs to 174 residues: Beta-lactoglobulin (174 aa).

The N-terminal stretch at 1–18 is a signal peptide; the sequence is MKFLLLTVGLALIGAIQA. Cystine bridges form between cysteine 79–cysteine 172 and cysteine 122–cysteine 134.

Belongs to the calycin superfamily. Lipocalin family. Monomer.

Its subcellular location is the secreted. Its function is as follows. Lactoglobulin is the primary component of whey, it binds retinol and is probably involved in the transport of that molecule. The protein is Beta-lactoglobulin (LGB) of Notamacropus eugenii (Tammar wallaby).